Consider the following 501-residue polypeptide: Lysine--tRNA ligase (501 aa).

The Mg(2+) site is built by Glu404 and Glu411.

It belongs to the class-II aminoacyl-tRNA synthetase family. As to quaternary structure, homodimer. It depends on Mg(2+) as a cofactor.

The protein localises to the cytoplasm. It catalyses the reaction tRNA(Lys) + L-lysine + ATP = L-lysyl-tRNA(Lys) + AMP + diphosphate. In Campylobacter jejuni subsp. jejuni serotype O:6 (strain 81116 / NCTC 11828), this protein is Lysine--tRNA ligase.